We begin with the raw amino-acid sequence, 30 residues long: GIPCGESCVWIPCITSAIGCSCKSKVCYRN.

The cyclopeptide (Gly-Asn) cross-link spans 1–30 (GIPCGESCVWIPCITSAIGCSCKSKVCYRN). Intrachain disulfides connect cysteine 4-cysteine 20, cysteine 8-cysteine 22, and cysteine 13-cysteine 27.

This is a cyclic peptide.

Its function is as follows. Probably participates in a plant defense mechanism. Has strong cytotoxic activity against human lymphoma U-937 GTB and human myeloma RPMI-8226/s cell lines. This chain is Vitri peptide A, found in Viola arvensis (European field pansy).